The sequence spans 317 residues: COP9 signalosome complex subunit 6a (317 aa).

Positions 30–164 (TQLNPPASIC…VTIYESELHV (135 aa)) constitute an MPN domain.

It belongs to the peptidase M67A family. CSN6 subfamily. As to quaternary structure, component of the CSN complex, probably composed of CSN1, CSN2, CSN3, CSN4, CSN5 (CSN5A or CSN5B), CSN6 (CSN6A or CSN6B), CSN7 and CSN8. Interacts with itself. In the complex, it probably interacts directly with CSN4 and CSN5A or CSN5B. Interacts with CSN7 (via C-terminal tail). Binds to the translation initiation factors TIF3E1.

It localises to the cytoplasm. The protein resides in the nucleus. Component of the COP9 signalosome complex (CSN), a complex involved in various cellular and developmental processes such as photomorphogenesis and auxin and jasmonate responses. The CSN complex is an essential regulator of the ubiquitin (Ubl) conjugation pathway by mediating the deneddylation of the cullin subunits of SCF-type E3 ligase complexes, leading to decrease the Ubl ligase activity of SCF. It is involved in repression of photomorphogenesis in darkness by regulating the activity of COP1-containing Ubl ligase complexes. The complex is also required for degradation of PSIAA6 by regulating the activity of the Ubl ligase SCF-TIR complex. Essential for the structural integrity of the CSN holocomplex. The protein is COP9 signalosome complex subunit 6a of Arabidopsis thaliana (Mouse-ear cress).